The primary structure comprises 295 residues: 5,10-methylenetetrahydrofolate reductase (295 aa).

Glutamate 28 serves as the catalytic Proton donor/acceptor. NADH is bound at residue threonine 59. Residues histidine 89, arginine 119, glycine 120, aspartate 121, alanine 133, tyrosine 153, histidine 157, alanine 160, aspartate 166, asparagine 169, arginine 172, and lysine 173 each coordinate FAD. Aspartate 121 serves as a coordination point for (6S)-5-methyl-5,6,7,8-tetrahydrofolate. Glutamine 184 contributes to the NADH binding site. Glutamine 184, glutamine 220, and lysine 280 together coordinate (6S)-5-methyl-5,6,7,8-tetrahydrofolate.

The protein belongs to the methylenetetrahydrofolate reductase family. Requires FAD as cofactor.

It catalyses the reaction (6S)-5-methyl-5,6,7,8-tetrahydrofolate + NAD(+) = (6R)-5,10-methylene-5,6,7,8-tetrahydrofolate + NADH + H(+). It participates in one-carbon metabolism; tetrahydrofolate interconversion. Its pathway is amino-acid biosynthesis; L-methionine biosynthesis via de novo pathway. Its function is as follows. Catalyzes the NADH-dependent reduction of 5,10-methylenetetrahydrofolate to 5-methyltetrahydrofolate. Is required to provide the methyl group necessary for methionine synthetase to convert homocysteine to methionine; the methyl group is given by 5-methyltetrahydrofolate. This is 5,10-methylenetetrahydrofolate reductase (metF) from Buchnera aphidicola subsp. Baizongia pistaciae (strain Bp).